Consider the following 938-residue polypeptide: Isoleucine--tRNA ligase (938 aa).

The 'HIGH' region signature appears at 58–68; that stretch reads PYANGNIHIGH. Glutamate 562 serves as a coordination point for L-isoleucyl-5'-AMP. Positions 603 to 607 match the 'KMSKS' region motif; that stretch reads KMSKS. Lysine 606 lines the ATP pocket. Zn(2+) is bound by residues cysteine 901, cysteine 904, cysteine 921, and cysteine 924.

The protein belongs to the class-I aminoacyl-tRNA synthetase family. IleS type 1 subfamily. Monomer. It depends on Zn(2+) as a cofactor.

It is found in the cytoplasm. It carries out the reaction tRNA(Ile) + L-isoleucine + ATP = L-isoleucyl-tRNA(Ile) + AMP + diphosphate. Its function is as follows. Catalyzes the attachment of isoleucine to tRNA(Ile). As IleRS can inadvertently accommodate and process structurally similar amino acids such as valine, to avoid such errors it has two additional distinct tRNA(Ile)-dependent editing activities. One activity is designated as 'pretransfer' editing and involves the hydrolysis of activated Val-AMP. The other activity is designated 'posttransfer' editing and involves deacylation of mischarged Val-tRNA(Ile). In Actinobacillus pleuropneumoniae serotype 5b (strain L20), this protein is Isoleucine--tRNA ligase.